A 367-amino-acid polypeptide reads, in one-letter code: Peptide chain release factor 2 (367 aa).

Glutamine 254 is subject to N5-methylglutamine.

The protein belongs to the prokaryotic/mitochondrial release factor family. Post-translationally, methylated by PrmC. Methylation increases the termination efficiency of RF2.

Its subcellular location is the cytoplasm. Peptide chain release factor 2 directs the termination of translation in response to the peptide chain termination codons UGA and UAA. In Leptospira interrogans serogroup Icterohaemorrhagiae serovar Lai (strain 56601), this protein is Peptide chain release factor 2.